Consider the following 587-residue polypeptide: Zinc finger protein 496 (587 aa).

Residues 1 to 40 (MPTALCPRVLAPKESEEPRKMRSPPGENPSPQGELPSPES) are disordered. The segment covering 11 to 20 (APKESEEPRK) has biased composition (basic and acidic residues). Lys-13 participates in a covalent cross-link: Glycyl lysine isopeptide (Lys-Gly) (interchain with G-Cter in SUMO2). An SCAN box domain is found at 42 to 124 (RRLFRRFRYQ…AAVEALEREP (83 aa)). Position 185 is a phosphoserine (Ser-185). Residues 221-291 (SPFKDMILCF…ELQDLQGKEV (71 aa)) enclose the KRAB domain. Residues 260 to 282 (PPNDLAAQPDLSQGEENEPRVPE) are disordered. The residue at position 299 (Ser-299) is a Phosphoserine. The segment at 358-399 (SSSGDEDSQHGPYCTEELGSPTEKQRSLPASHRSSTEAGGEV) is disordered. Polar residues predominate over residues 389-399 (HRSSTEAGGEV). Lys-403 participates in a covalent cross-link: Glycyl lysine isopeptide (Lys-Gly) (interchain with G-Cter in SUMO2). The C2H2-type 1; degenerate zinc finger occupies 406 to 428 (YVCPNCGKIFRWRVNFIRHLRSR). C2H2-type zinc fingers lie at residues 435 to 457 (HECSVCGELFSDSEDLDGHLESH) and 463 to 485 (YRCGACGKSFRLNSHLLSHRRIH). The interval 488–513 (PDRLQPVEKREQAASEDADKGPKEPL) is disordered. A Glycyl lysine isopeptide (Lys-Gly) (interchain with G-Cter in SUMO2) cross-link involves residue Lys-496. 2 C2H2-type zinc fingers span residues 522 to 545 (FQCCECGKAFQRHDHLARHRSHFH) and 553 to 575 (FQCRYCVKSFTQNYDLLRHERLH).

Belongs to the krueppel C2H2-type zinc-finger protein family. In terms of assembly, interacts (via zinc-fingers) with JARID2. Interacts with NSD1.

Its subcellular location is the nucleus. In terms of biological role, DNA-binding transcription factor that can both act as an activator and a repressor. In Homo sapiens (Human), this protein is Zinc finger protein 496 (ZNF496).